The primary structure comprises 147 residues: Cytochrome c-type biogenesis protein CcmE 1 (147 aa).

Over Met-1 to Arg-9 the chain is Cytoplasmic. The chain crosses the membrane as a helical; Signal-anchor for type II membrane protein span at residues Ile-10–Ala-30. At Met-31–Ser-147 the chain is on the periplasmic side. Heme is bound by residues His-123 and Tyr-127.

Belongs to the CcmE/CycJ family.

The protein localises to the cell inner membrane. Heme chaperone required for the biogenesis of c-type cytochromes. Transiently binds heme delivered by CcmC and transfers the heme to apo-cytochromes in a process facilitated by CcmF and CcmH. The sequence is that of Cytochrome c-type biogenesis protein CcmE 1 from Ruegeria pomeroyi (strain ATCC 700808 / DSM 15171 / DSS-3) (Silicibacter pomeroyi).